The following is a 115-amino-acid chain: NADH-ubiquinone oxidoreductase chain 3 (115 aa).

The next 3 membrane-spanning stretches (helical) occupy residues L5–P25, F55–L75, and L86–W106.

Belongs to the complex I subunit 3 family. As to quaternary structure, core subunit of respiratory chain NADH dehydrogenase (Complex I) which is composed of 45 different subunits. Interacts with TMEM186. Interacts with TMEM242.

Its subcellular location is the mitochondrion inner membrane. It carries out the reaction a ubiquinone + NADH + 5 H(+)(in) = a ubiquinol + NAD(+) + 4 H(+)(out). Its function is as follows. Core subunit of the mitochondrial membrane respiratory chain NADH dehydrogenase (Complex I) which catalyzes electron transfer from NADH through the respiratory chain, using ubiquinone as an electron acceptor. Essential for the catalytic activity of complex I. This chain is NADH-ubiquinone oxidoreductase chain 3, found in Avahi unicolor (Sambirano woolly lemur).